The following is a 147-amino-acid chain: Deoxyuridine 5'-triphosphate nucleotidohydrolase (147 aa).

Residue R24 coordinates Mg(2+). Residues 68–70, 82–85, Y88, G93, I95, and R111 each bind dUTP; these read PRS and GVID.

This sequence belongs to the dUTPase family.

The enzyme catalyses dUTP + H2O = dUMP + diphosphate + H(+). This enzyme is involved in nucleotide metabolism: it produces dUMP, the immediate precursor of thymidine nucleotides and it decreases the intracellular concentration of dUTP so that uracil cannot be incorporated into DNA. The protein is Deoxyuridine 5'-triphosphate nucleotidohydrolase (OPG046) of Homo sapiens (Human).